Here is a 470-residue protein sequence, read N- to C-terminus: Nuclear receptor subfamily 0 group B member 1 (470 aa).

3 tandem repeats follow at residues 1–67 (MAGE…YRCC), 68–133 (FCGK…YRCC), and 134–200 (FCGE…YRCC). The 4 X 67 AA tandem repeats stretch occupies residues 1 to 253 (MAGENHQWQG…RPVALKNPQV (253 aa)). Short sequence motifs (LXXLL motif) lie at residues 13-17 (LYNML), 80-84 (LYSML), and 146-150 (LYSLL). The stretch at 201-253 (FCGEDHPQQGSTLYCMPTSTNQAQAAPEERPRAPWWDTSSGALRPVALKNPQV) is one 4; truncated repeat. One can recognise an NR LBD domain in the interval 205–469 (DHPQQGSTLY…DMMLEMLCTK (265 aa)). Positions 461–466 (MMLEML) match the AF-2 motif motif.

It belongs to the nuclear hormone receptor family. NR0 subfamily. Homodimer. Interacts with NR5A1, NR5A2, NR0B2 and with COPS2. Interacts with ESRRB; represses ESRRB activity at the GATA6 promoter.

The protein localises to the nucleus. Its subcellular location is the cytoplasm. Its function is as follows. Nuclear receptor that lacks a DNA-binding domain and acts as a corepressor that inhibits the transcriptional activity of other nuclear receptors through heterodimeric interactions. Component of a cascade required for the development of the hypothalamic-pituitary-adrenal-gonadal axis. May also have a role in the development of the embryo and in the maintenance of embryonic stem cell pluripotency. The chain is Nuclear receptor subfamily 0 group B member 1 (NR0B1) from Macaca mulatta (Rhesus macaque).